Here is a 241-residue protein sequence, read N- to C-terminus: Putative ABC transporter ATP-binding protein CA_C0773 (241 aa).

An ABC transporter domain is found at 2-241 (IKLEKVSFTY…REFLMECNII (240 aa)). 34–41 (GPNGSGKS) provides a ligand contact to ATP.

This sequence belongs to the ABC transporter superfamily.

The protein localises to the cell membrane. In terms of biological role, probably part of an ABC transporter complex. Responsible for energy coupling to the transport system. This Clostridium acetobutylicum (strain ATCC 824 / DSM 792 / JCM 1419 / IAM 19013 / LMG 5710 / NBRC 13948 / NRRL B-527 / VKM B-1787 / 2291 / W) protein is Putative ABC transporter ATP-binding protein CA_C0773.